A 301-amino-acid polypeptide reads, in one-letter code: Probable 5-dehydro-4-deoxyglucarate dehydratase (301 aa).

This sequence belongs to the DapA family.

The catalysed reaction is 5-dehydro-4-deoxy-D-glucarate + H(+) = 2,5-dioxopentanoate + CO2 + H2O. Its pathway is carbohydrate acid metabolism; D-glucarate degradation; 2,5-dioxopentanoate from D-glucarate: step 2/2. In Cereibacter sphaeroides (strain ATCC 17029 / ATH 2.4.9) (Rhodobacter sphaeroides), this protein is Probable 5-dehydro-4-deoxyglucarate dehydratase.